The sequence spans 714 residues: Glycine--tRNA ligase beta subunit (714 aa).

Belongs to the class-II aminoacyl-tRNA synthetase family. Tetramer of two alpha and two beta subunits.

The protein localises to the cytoplasm. The enzyme catalyses tRNA(Gly) + glycine + ATP = glycyl-tRNA(Gly) + AMP + diphosphate. This Rhodospirillum centenum (strain ATCC 51521 / SW) protein is Glycine--tRNA ligase beta subunit.